A 485-amino-acid polypeptide reads, in one-letter code: E3 ubiquitin-protein ligase TRIM34B (485 aa).

The RING-type zinc-finger motif lies at 15-58 (CPVCQELLTKALSLGCGHLVCQACLISNKNAVINPRGKSSCPVC). The B box-type zinc-finger motif lies at 91–127 (TKRDLCVHHGEKLLLFCKEDKKVICWVCERSQEHRGH). Zn(2+)-binding residues include cysteine 96, histidine 99, cysteine 118, and histidine 124. The stretch at 136–170 (VRECQENLQKALTRLRKEQEKVETLEADIKEDRLS) forms a coiled coil. Residues 282–485 (LSGMLQKFRE…APMTLCPLNS (204 aa)) enclose the B30.2/SPRY domain.

The protein belongs to the TRIM/RBCC family. In terms of assembly, homotrimer. Interacts (via B-box and SPRY domain) with TRIM5.

Its subcellular location is the cytoplasm. The protein resides in the mitochondrion. The catalysed reaction is S-ubiquitinyl-[E2 ubiquitin-conjugating enzyme]-L-cysteine + [acceptor protein]-L-lysine = [E2 ubiquitin-conjugating enzyme]-L-cysteine + N(6)-ubiquitinyl-[acceptor protein]-L-lysine.. It functions in the pathway protein modification; protein ubiquitination. Functions as antiviral protein and contributes to the defense against retroviral infections. Acts as a capsid-specific restriction factor with the help of TRIM5 and prevents infection from non-host-adapted retroviruses. During influenza A virus infection, promotes programmed cell death by targeting ZBP1 for 'Lys-63'-linked polyubiquitination. In turn, promotes ZBP1 recruitment of RIPK3 to mediate virus-induced programmed necrosis. Negatively regulates the function of mitochondria by enhancing mitochondrial depolarization leading to cytochrome c release and mitochondria-dependent apoptosis. Also promotes the formation of multinucleated giant cells by means of cell fusion and phagocytosis in epithelial cells. Regulates intestinal inflammation by controlling the exocytosis of the major component of colonic mucus MUC2 from colonic goblet cells. This is E3 ubiquitin-protein ligase TRIM34B from Mus musculus (Mouse).